The following is a 282-amino-acid chain: MEKIFLNGEFVSPSEAKVSYNDRGYVFGDGIYEYIRVYNGKLFTVTEHYERFLRSANEIGLDLNYSVEELIELSRKLVDMNQIETGAIYIQATRGVAERNHSFPTPEVEPAIVAYTKSYDRPYDHLENGVNGVTVEDIRWLRCDIKSLNLLGNVLAKEYAVKYNAVEAIQHRGETVTEGSSSNAYAIKDGVIYTHPINNYILNGITRIVIKKIAEDYNIPFKEETFTVDFLKNADEVIVSSTSAEVTPVIKLDGEPVNDGKVGPITRQLQEGFEKYIESHSI.

Residue Y32 participates in substrate binding. R51 is a binding site for pyridoxal 5'-phosphate. The substrate site is built by R99 and H101. The active-site Proton acceptor is the K146. An N6-(pyridoxal phosphate)lysine modification is found at K146. E178 provides a ligand contact to pyridoxal 5'-phosphate.

It belongs to the class-IV pyridoxal-phosphate-dependent aminotransferase family. In terms of assembly, homodimer. Requires pyridoxal 5'-phosphate as cofactor.

It catalyses the reaction D-alanine + 2-oxoglutarate = D-glutamate + pyruvate. Its function is as follows. Acts on the D-isomers of alanine, leucine, aspartate, glutamate, aminobutyrate, norvaline and asparagine. The enzyme transfers an amino group from a substrate D-amino acid to the pyridoxal phosphate cofactor to form pyridoxamine and an alpha-keto acid in the first half-reaction. The second half-reaction is the reverse of the first, transferring the amino group from the pyridoxamine to a second alpha-keto acid to form the product D-amino acid via a ping-pong mechanism. This is an important process in the formation of D-alanine and D-glutamate, which are essential bacterial cell wall components. The sequence is that of D-alanine aminotransferase (dat) from Staphylococcus aureus (strain COL).